We begin with the raw amino-acid sequence, 249 residues long: Electron transfer flavoprotein subunit beta (249 aa).

This sequence belongs to the ETF beta-subunit/FixA family. As to quaternary structure, heterodimer of an alpha and a beta subunit. It depends on FAD as a cofactor. AMP serves as cofactor.

In terms of biological role, the electron transfer flavoprotein serves as a specific electron acceptor for other dehydrogenases. It transfers the electrons to the main respiratory chain via ETF-ubiquinone oxidoreductase (ETF dehydrogenase). In Bradyrhizobium diazoefficiens (strain JCM 10833 / BCRC 13528 / IAM 13628 / NBRC 14792 / USDA 110), this protein is Electron transfer flavoprotein subunit beta (etfB).